Consider the following 648-residue polypeptide: Macrolide export ATP-binding/permease protein MacB (648 aa).

Residues 5 to 243 (LELCNVSRSY…QGVDAAVVNT (239 aa)) enclose the ABC transporter domain. 41-48 (GVSGSGKS) is a binding site for ATP. 5 helical membrane passes run 273–293 (LLTMLGIIIGIASVVSIVVVG), 417–437 (ANVVGEVVLAGNMPVIVIGVA), 523–543 (LFLTLVAVISLVVGGIGVMNI), 577–597 (VLVCLVGGALGISLSMFIAFM), and 611–631 (LTALASAFLCSTFTGILFGWL).

It belongs to the ABC transporter superfamily. Macrolide exporter (TC 3.A.1.122) family. In terms of assembly, homodimer. Part of the tripartite efflux system MacAB-TolC, which is composed of an inner membrane transporter, MacB, a periplasmic membrane fusion protein, MacA, and an outer membrane component, TolC. The complex forms a large protein conduit and can translocate molecules across both the inner and outer membranes. Interacts with MacA.

The protein resides in the cell inner membrane. Its function is as follows. Part of the tripartite efflux system MacAB-TolC. MacB is a non-canonical ABC transporter that contains transmembrane domains (TMD), which form a pore in the inner membrane, and an ATP-binding domain (NBD), which is responsible for energy generation. Confers resistance against macrolides. The polypeptide is Macrolide export ATP-binding/permease protein MacB (Salmonella choleraesuis (strain SC-B67)).